Here is a 514-residue protein sequence, read N- to C-terminus: 2,3-bisphosphoglycerate-independent phosphoglycerate mutase (514 aa).

Residues Asp-14 and Ser-64 each coordinate Mn(2+). Residue Ser-64 is the Phosphoserine intermediate of the active site. Substrate contacts are provided by residues His-125, 155–156 (RD), Arg-187, Arg-193, 263–266 (RADR), and Lys-336. Positions 403, 407, 444, 445, and 463 each coordinate Mn(2+).

It belongs to the BPG-independent phosphoglycerate mutase family. In terms of assembly, monomer. It depends on Mn(2+) as a cofactor.

The catalysed reaction is (2R)-2-phosphoglycerate = (2R)-3-phosphoglycerate. It participates in carbohydrate degradation; glycolysis; pyruvate from D-glyceraldehyde 3-phosphate: step 3/5. Functionally, catalyzes the interconversion of 2-phosphoglycerate and 3-phosphoglycerate. This is 2,3-bisphosphoglycerate-independent phosphoglycerate mutase from Escherichia coli (strain ATCC 8739 / DSM 1576 / NBRC 3972 / NCIMB 8545 / WDCM 00012 / Crooks).